Consider the following 447-residue polypeptide: Tubulin alpha chain (447 aa).

Positions 11, 71, 144, 145, 179, 206, and 228 each coordinate GTP. Mg(2+) is bound at residue E71. The active site involves E254.

Belongs to the tubulin family. Dimer of alpha and beta chains. A typical microtubule is a hollow water-filled tube with an outer diameter of 25 nm and an inner diameter of 15 nM. Alpha-beta heterodimers associate head-to-tail to form protofilaments running lengthwise along the microtubule wall with the beta-tubulin subunit facing the microtubule plus end conferring a structural polarity. Microtubules usually have 13 protofilaments but different protofilament numbers can be found in some organisms and specialized cells. Requires Mg(2+) as cofactor.

The protein localises to the cytoplasm. It localises to the cytoskeleton. The catalysed reaction is GTP + H2O = GDP + phosphate + H(+). Tubulin is the major constituent of microtubules, a cylinder consisting of laterally associated linear protofilaments composed of alpha- and beta-tubulin heterodimers. Microtubules grow by the addition of GTP-tubulin dimers to the microtubule end, where a stabilizing cap forms. Below the cap, tubulin dimers are in GDP-bound state, owing to GTPase activity of alpha-tubulin. This chain is Tubulin alpha chain (TUBA), found in Avena sativa (Oat).